We begin with the raw amino-acid sequence, 1018 residues long: MKMWLLVSHLVIISITTCLAEFTWYRRYGHGVSEEDKGFGPIFEEQPINTIYPEESLEGKVSLNCRARASPFPVYKWRMNNGDVDLTSDRYSMVGGNLVINNPDKQKDAGIYYCLASNNYGMVRSTEATLSFGYLDPFPPEERPEVRVKEGKGMVLLCDPPYHFPDDLSYRWLLNEFPVFITMDKRRFVSQTNGNLYIANVEASDKGNYSCFVSSPSITKSVFSKFIPLIPIPERTTKPYPADIVVQFKDVYALMGQNVTLECFALGNPVPDIRWRKVLEPMPSTAEISTSGAVLKIFNIQLEDEGIYECEAENIRGKDKHQARIYVQAFPEWVEHINDTEVDIGSDLYWPCVATGKPIPTIRWLKNGYAYHKGELRLYDVTFENAGMYQCIAENTYGAIYANAELKILALAPTFEMNPMKKKILAAKGGRVIIECKPKAAPKPKFSWSKGTEWLVNSSRILIWEDGSLEINNITRNDGGIYTCFAENNRGKANSTGTLVITDPTRIILAPINADITVGENATMQCAASFDPALDLTFVWSFNGYVIDFNKENIHYQRNFMLDSNGELLIRNAQLKHAGRYTCTAQTIVDNSSASADLVVRGPPGPPGGLRIEDIRATSVALTWSRGSDNHSPISKYTIQTKTILSDDWKDAKTDPPIIEGNMEAARAVDLIPWMEYEFRVVATNTLGRGEPSIPSNRIKTDGAAPNVAPSDVGGGGGRNRELTITWAPLSREYHYGNNFGYIVAFKPFDGEEWKKVTVTNPDTGRYVHKDETMSPSTAFQVKVKAFNNKGDGPYSLVAVINSAQDAPSEAPTEVGVKVLSSSEISVHWEHVLEKIVESYQIRYWAAHDKEEAANRVQVTSQEYSARLENLLPDTQYFIEVGACNSAGCGPPSDMIEAFTKKAPPSQPPRIISSVRSGSRYIITWDHVVALSNESTVTGYKVLYRPDGQHDGKLYSTHKHSIEVPIPRDGEYVVEVRAHSDGGDGVVSQVKISGAPTLSPSLLGLLLPAFGILVYLEF.

The first 20 residues, 1–20 (MKMWLLVSHLVIISITTCLA), serve as a signal peptide directing secretion. Ig-like C2-type domains follow at residues 41 to 131 (PIFE…ATLS), 137 to 223 (PFPP…KSVF), 241 to 326 (PADI…ARIY), 331 to 407 (PEWV…AELK), 413 to 500 (PTFE…GTLV), and 504 to 601 (PTRI…LVVR). Disulfide bonds link C65–C114 and C158–C211. Residues N208 and N258 are each glycosylated (N-linked (GlcNAc...) asparagine). A disulfide bridge links C263 with C310. Residue N338 is glycosylated (N-linked (GlcNAc...) asparagine). Disulfide bonds link C352–C391 and C436–C484. N-linked (GlcNAc...) asparagine glycans are attached at residues N457 and N473. N494 carries N-linked (GlcNAc...) (complex) asparagine glycosylation. The N-linked (GlcNAc...) asparagine glycan is linked to N521. The cysteines at positions 526 and 583 are disulfide-linked. N591 carries an N-linked (GlcNAc...) asparagine glycan. Fibronectin type-III domains follow at residues 606-704 (PPGG…TDGA), 709-806 (APSD…SAQD), 811-906 (APTE…APPS), and 907-1000 (QPPR…TLSP). Positions 693–717 (SIPSNRIKTDGAAPNVAPSDVGGGG) are disordered. An N-linked (GlcNAc...) asparagine glycan is attached at N933. S993 carries GPI-anchor amidated serine lipidation. A propeptide spans 994-1018 (GAPTLSPSLLGLLLPAFGILVYLEF) (removed in mature form).

This sequence belongs to the immunoglobulin superfamily. Contactin family. In terms of assembly, monomer. Interacts with CNTNAP1 in cis form. Binds to the carbonic-anhydrase like domain of PTPRZ1. Interacts with NOTCH1 and TNR. Detected in a complex with NRCAM and PTPRB. Interacts with TASOR. Strongly expressed in brain and in neuroblastoma and retinoblastoma cell lines. Lower levels of expression in lung, pancreas, kidney and skeletal muscle.

It is found in the cell membrane. Contactins mediate cell surface interactions during nervous system development. Involved in the formation of paranodal axo-glial junctions in myelinated peripheral nerves and in the signaling between axons and myelinating glial cells via its association with CNTNAP1. Participates in oligodendrocytes generation by acting as a ligand of NOTCH1. Its association with NOTCH1 promotes NOTCH1 activation through the released notch intracellular domain (NICD) and subsequent translocation to the nucleus. Interaction with TNR induces a repulsion of neurons and an inhibition of neurite outgrowth. This chain is Contactin-1 (CNTN1), found in Homo sapiens (Human).